Here is a 42-residue protein sequence, read N- to C-terminus: Photosystem II reaction center protein J (42 aa).

Residues 10-30 form a helical membrane-spanning segment; the sequence is IPLWIIGTLAGTLVIGLLAIF.

It belongs to the PsbJ family. As to quaternary structure, PSII is composed of 1 copy each of membrane proteins PsbA, PsbB, PsbC, PsbD, PsbE, PsbF, PsbH, PsbI, PsbJ, PsbK, PsbL, PsbM, PsbT, PsbX, PsbY, PsbZ, Psb30/Ycf12, at least 3 peripheral proteins of the oxygen-evolving complex and a large number of cofactors. It forms dimeric complexes.

The protein resides in the plastid. It localises to the chloroplast thylakoid membrane. One of the components of the core complex of photosystem II (PSII). PSII is a light-driven water:plastoquinone oxidoreductase that uses light energy to abstract electrons from H(2)O, generating O(2) and a proton gradient subsequently used for ATP formation. It consists of a core antenna complex that captures photons, and an electron transfer chain that converts photonic excitation into a charge separation. This Chaetosphaeridium globosum (Charophycean green alga) protein is Photosystem II reaction center protein J.